Here is a 346-residue protein sequence, read N- to C-terminus: UDP-3-O-acylglucosamine N-acyltransferase (346 aa).

The Proton acceptor role is filled by His-253.

Belongs to the transferase hexapeptide repeat family. LpxD subfamily. Homotrimer.

It catalyses the reaction a UDP-3-O-[(3R)-3-hydroxyacyl]-alpha-D-glucosamine + a (3R)-hydroxyacyl-[ACP] = a UDP-2-N,3-O-bis[(3R)-3-hydroxyacyl]-alpha-D-glucosamine + holo-[ACP] + H(+). Its pathway is bacterial outer membrane biogenesis; LPS lipid A biosynthesis. In terms of biological role, catalyzes the N-acylation of UDP-3-O-acylglucosamine using 3-hydroxyacyl-ACP as the acyl donor. Is involved in the biosynthesis of lipid A, a phosphorylated glycolipid that anchors the lipopolysaccharide to the outer membrane of the cell. In Rickettsia typhi (strain ATCC VR-144 / Wilmington), this protein is UDP-3-O-acylglucosamine N-acyltransferase.